The chain runs to 70 residues: Protein SlyX homolog (70 aa).

It belongs to the SlyX family.

The polypeptide is Protein SlyX homolog (Shewanella frigidimarina (strain NCIMB 400)).